Consider the following 854-residue polypeptide: Periodic tryptophan protein 2 homolog (854 aa).

WD repeat units lie at residues 9 to 52 (NLVG…TFPF), 53 to 93 (ENHK…LHYF), 94 to 132 (NFKSPVGAIEFSPNGKFFAVSLGKLIQVWRTPNSLEERE), 144 to 183 (GHFDDIVSISWSADSRFFISTSKDLTARLHSVDPIEGFHP), 188 to 227 (GHKNTVVSGFFSKDQQTIYTVSKDGALFVWKYSPLFQAGE), 252 to 291 (NQNSKLRCAAFHPTSNLLVVGFSSGLFGIYELPSFTMLYQ), 294 to 334 (ITQS…YVLK), 337 to 376 (SHYDALSTLQYSSDGQRIITGADDGKIKVWDMNSGFCIVT), 379 to 418 (QHTSAVSGLCFSKRGNVLFSSSLDGSVRAWDLIRYRNFRT), 422 to 464 (PSRV…ETLA), 465 to 504 (GHEGPVSSLSFNSSGSLLASGSWDKTVRIWDIFSRSGIVE), 507 to 546 (PIPSDVLSLAFHPDGKEVCVASLDGQLTFWNVQEGKQTSL), and 569 to 608 (SLNKTFTSICYSADGSCVLSAGTSKYVCLYDIITGVLIKK). Residue T640 is modified to Phosphothreonine. A Phosphoserine modification is found at S645. One copy of the WD 14 repeat lies at 668–709 (TRPEIICHGVQFSPSGGAFAAATTEGLMIYSLYNDFLFDPIN).

This sequence belongs to the WD repeat PWP2 family.

The chain is Periodic tryptophan protein 2 homolog from Schizosaccharomyces pombe (strain 972 / ATCC 24843) (Fission yeast).